Here is a 285-residue protein sequence, read N- to C-terminus: Hydroxyethylthiazole kinase (285 aa).

M43 contributes to the substrate binding site. Positions 119 and 172 each coordinate ATP. G199 serves as a coordination point for substrate.

Belongs to the Thz kinase family. Mg(2+) is required as a cofactor.

It catalyses the reaction 5-(2-hydroxyethyl)-4-methylthiazole + ATP = 4-methyl-5-(2-phosphooxyethyl)-thiazole + ADP + H(+). Its pathway is cofactor biosynthesis; thiamine diphosphate biosynthesis; 4-methyl-5-(2-phosphoethyl)-thiazole from 5-(2-hydroxyethyl)-4-methylthiazole: step 1/1. Catalyzes the phosphorylation of the hydroxyl group of 4-methyl-5-beta-hydroxyethylthiazole (THZ). This is Hydroxyethylthiazole kinase from Desulfovibrio desulfuricans (strain ATCC 27774 / DSM 6949 / MB).